A 275-amino-acid polypeptide reads, in one-letter code: 2,3,4,5-tetrahydropyridine-2,6-dicarboxylate N-succinyltransferase (275 aa).

The substrate site is built by Arg-108 and Asp-145.

This sequence belongs to the transferase hexapeptide repeat family. In terms of assembly, homotrimer.

Its subcellular location is the cytoplasm. The enzyme catalyses (S)-2,3,4,5-tetrahydrodipicolinate + succinyl-CoA + H2O = (S)-2-succinylamino-6-oxoheptanedioate + CoA. It participates in amino-acid biosynthesis; L-lysine biosynthesis via DAP pathway; LL-2,6-diaminopimelate from (S)-tetrahydrodipicolinate (succinylase route): step 1/3. This chain is 2,3,4,5-tetrahydropyridine-2,6-dicarboxylate N-succinyltransferase, found in Ruegeria pomeroyi (strain ATCC 700808 / DSM 15171 / DSS-3) (Silicibacter pomeroyi).